Here is a 409-residue protein sequence, read N- to C-terminus: MIPGNRMLMVVLLCQVLLGGASHASLIPETGKKKVAEIQGHAGGRRSGQSHELLRDFEATLLQMFGLRRRPQPSKSAVIPDYMRDLYRLQSGEEEEEEQIRSIDLEYPERPTSRANTVRSFHHEEHLEDIPGTSENSAFRFFFNLSSIPENEVISSAELRLFREQVDQGPDWEQGFHRINIYEVMKPPAEVVPGHLITRLLDTRLVHHNVTRWETFDVSPAVLRWTREKQPNYGLAIEVTHLHQTRTHQGQHVRISRSLPQGNGDWAQLRPLLVTFGHDGRGHALTRRRRAKRSPKHHPQRARKKNKNCRRHSLYVDFSDVGWNDWIVAPPGYQAFYCHGDCPFPLADHLNSTNHAIVQTLVNSVNSSIPKACCVPTELSAISMLYLDEYDKVVLKNYQEMVVEGCGCR.

Positions 1 to 19 (MIPGNRMLMVVLLCQVLLG) are cleaved as a signal peptide. Positions 20–293 (GASHASLIPE…ALTRRRRAKR (274 aa)) are excised as a propeptide. A Phosphoserine modification is found at S91. Residues N144 and N209 are each glycosylated (N-linked (GlcNAc...) asparagine). A disordered region spans residues 284-308 (ALTRRRRAKRSPKHHPQRARKKNKN). 3 cysteine pairs are disulfide-bonded: C309/C374, C338/C406, and C342/C408. N-linked (GlcNAc...) asparagine glycans are attached at residues N351 and N366.

It belongs to the TGF-beta family. Homodimer; disulfide-linked. Interacts with GREM2. Part of a complex consisting of TWSG1 and CHRD. Interacts with the serine proteases, HTRA1 and HTRA3; the interaction with either inhibits BMP4-mediated signaling. The HTRA protease activity is required for this inhibition. Interacts with SOSTDC1. Interacts with FBN1 (via N-terminal domain) and FBN2. Interacts with type I receptor BMPR1A. Interacts with type II receptor BMPR2. Interacts with FSTL1; this interaction inhibits the activation of the BMP4/Smad1/5/8 signaling pathway. Interacts with TGFBR3.

It localises to the secreted. Its subcellular location is the extracellular space. It is found in the extracellular matrix. Growth factor of the TGF-beta superfamily that plays essential roles in many developmental processes, including neurogenesis, vascular development, angiogenesis and osteogenesis. Acts in concert with PTHLH/PTHRP to stimulate ductal outgrowth during embryonic mammary development and to inhibit hair follicle induction. Initiates the canonical BMP signaling cascade by associating with type I receptor BMPR1A and type II receptor BMPR2. Once all three components are bound together in a complex at the cell surface, BMPR2 phosphorylates and activates BMPR1A. In turn, BMPR1A propagates signal by phosphorylating SMAD1/5/8 that travel to the nucleus and act as activators and repressors of transcription of target genes. Positively regulates the expression of odontogenic development regulator MSX1 via inducing the IPO7-mediated import of SMAD1 to the nucleus. Required for MSX1-mediated mesenchymal molar tooth bud development beyond the bud stage, via promoting Wnt signaling. Acts as a positive regulator of odontoblast differentiation during mesenchymal tooth germ formation, expression is repressed during the bell stage by MSX1-mediated inhibition of CTNNB1 signaling. Able to induce its own expression in dental mesenchymal cells and also in the neighboring dental epithelial cells via an MSX1-mediated pathway. Can also signal through non-canonical BMP pathways such as ERK/MAP kinase, PI3K/Akt, or SRC cascades. For example, induces SRC phosphorylation which, in turn, activates VEGFR2, leading to an angiogenic response. The chain is Bone morphogenetic protein 4 from Suncus murinus (Asian house shrew).